The following is a 502-amino-acid chain: Lysine--tRNA ligase (502 aa).

The tract at residues 1 to 22 is disordered; the sequence is MSDHEQAQAQSQDENQIMAERR. The Mg(2+) site is built by E413 and E420.

The protein belongs to the class-II aminoacyl-tRNA synthetase family. In terms of assembly, homodimer. Mg(2+) serves as cofactor.

Its subcellular location is the cytoplasm. The catalysed reaction is tRNA(Lys) + L-lysine + ATP = L-lysyl-tRNA(Lys) + AMP + diphosphate. The chain is Lysine--tRNA ligase from Chromobacterium violaceum (strain ATCC 12472 / DSM 30191 / JCM 1249 / CCUG 213 / NBRC 12614 / NCIMB 9131 / NCTC 9757 / MK).